The chain runs to 300 residues: Ribosomal RNA small subunit methyltransferase H (300 aa).

Residues 38 to 40 (GGH), Glu-55, Ile-85, Asp-102, and His-109 each bind S-adenosyl-L-methionine.

Belongs to the methyltransferase superfamily. RsmH family.

It localises to the cytoplasm. The enzyme catalyses cytidine(1402) in 16S rRNA + S-adenosyl-L-methionine = N(4)-methylcytidine(1402) in 16S rRNA + S-adenosyl-L-homocysteine + H(+). In terms of biological role, specifically methylates the N4 position of cytidine in position 1402 (C1402) of 16S rRNA. The protein is Ribosomal RNA small subunit methyltransferase H of Brachyspira hyodysenteriae (strain ATCC 49526 / WA1).